We begin with the raw amino-acid sequence, 421 residues long: MRVIFVISLVSFMFVTWQTNPVHCRQHKTPQVVDLGYSGAKVETVMKTSDVVYAKPMCHGGRCPPPPPTKTCSKPSSLKAVSRAGHAGYFGTIGSGKYKNNENCWWSIQAPADQRLRLHFESLYLEYGNRYCPYDYVNIHNGKNENGQRLGKYCGIKAPDDIITTGNSAYVRFSTDSSVTKYGFRLRYSIVSCNSLHTIFGSHGEFGTVGPAYGNFEECSWKIEVPNGKRVRLHFKRFHLENNNKYCPYDKLKIYDGSSASASLKGTLCGKRRPKDIESTGKTMFVTFSSDISLTFPGFRIQYSVPASCSVVNELTGPSGTFGTTGSQYENNEVCSWKIEVAQNKRVLLHIYRFNIEVEANCEYDSLTVYKGPNDSAPMLGKYCGETIPTFMVSSGNTMFIKFQTDGSARKPGFWIGYTTG.

Residues Met-1–Cys-24 form the signal peptide. 6 disulfides stabilise this stretch: Cys-72/Cys-104, Cys-132/Cys-154, Cys-193/Cys-219, Cys-247/Cys-269, Cys-309/Cys-335, and Cys-362/Cys-384. 3 CUB domains span residues Cys-72 to Val-191, Cys-193 to Pro-306, and Cys-309 to Gly-421.

Detected in vestimentum and trunk but not in opisthosome or obturaculum. In the vestimentum, expression is restricted to epithelial cells under apical cuticular plaques.

Functionally, may play a role in protein-protein interactions during tube assembly. The protein is Exoskeleton protein RP43 of Riftia pachyptila (Vent tube worm).